Consider the following 361-residue polypeptide: Inhibin alpha chain (361 aa).

A signal peptide spans 1-21 (MLPLLLPLQLLLLMVMKGGHG). Residues 22-64 (CQGPELDRELVLAKVRALVLDALGPPNASKDGGKPVAQRLTRR) constitute a propeptide that is removed on maturation. Residues 45-82 (GPPNASKDGGKPVAQRLTRRHAHTGGSTRRSMENEDED) are disordered. Residues asparagine 48, asparagine 144, and asparagine 266 are each glycosylated (N-linked (GlcNAc...) asparagine). The propeptide at 65 to 230 (HAHTGGSTRR…PPSVGERARR (166 aa)) is inhibin alpha N-terminal region. Cystine bridges form between cysteine 260–cysteine 323, cysteine 289–cysteine 358, and cysteine 293–cysteine 360.

It belongs to the TGF-beta family. In terms of assembly, dimeric, linked by one or more disulfide bonds. Activin B is a dimer of alpha and beta-B. Inhibin A is a dimer of alpha and beta-A. Inhibin B is a dimer of alpha and beta-B. Interacts with TGFBR3L; this interaction regulates female fertility. Proteolytic processing yields a number of bioactive forms, consisting either solely of the mature alpha chain, of the most N-terminal propeptide linked through a disulfide bond to the mature alpha chain, or of the entire proprotein.

It is found in the secreted. Its function is as follows. Inhibins and activins inhibit and activate, respectively, the secretion of follitropin by the pituitary gland. Inhibins/activins are involved in regulating a number of diverse functions such as hypothalamic and pituitary hormone secretion, gonadal hormone secretion, germ cell development and maturation, erythroid differentiation, insulin secretion, nerve cell survival, embryonic axial development or bone growth, depending on their subunit composition. Inhibins appear to oppose the functions of activins. Functionally, inhibin A is a dimer of alpha/INHA and beta-A/INHBA that functions as a feedback regulator in the hypothalamic-pituitary-gonadal (HPG) axis. Inhibits the secretion of FSH from the anterior pituitary gland by acting on pituitary gonadotrope cells. Antagonizes activin A by binding to the proteoglycan, betaglycan, and forming a stable complex with and, thereby, sequestering type II activin receptors while excluding type I receptor. Inhibin B is a dimer of alpha and beta-B that plays a crucial role in the regulation of the reproductive system by inhibiting the secretion of follicle-stimulating hormone (FSH) from the anterior pituitary gland. Thereby, maintains reproductive homeostasis in both males and females. Acts as a more potent suppressor of FSH release than inhibin A. Functions as competitive receptor antagonist binding activin type II receptors with high affinity in the presence of the TGF-beta type III coreceptor/TGFBR3L. In Trichosurus vulpecula (Brush-tailed possum), this protein is Inhibin alpha chain (INHA).